The sequence spans 93 residues: MSRHQSYPLFNLEQAGVPDDLCPVATVVSPMLPGDWRSMRPVVDRDKCVKCAVCWLYCPVQCVEEHAAWFDFNLKTCKGCGICANECPQRRSR.

4Fe-4S ferredoxin-type domains are found at residues 39-68 (MRPV…EHAA) and 66-93 (HAAW…RRSR).

In terms of assembly, dimer of heteropentamers composed of an alpha (PadG), a beta (PadI), a gamma (PadE), a delta (PadF) and an epsilon (PadH) subunit. [4Fe-4S] cluster is required as a cofactor.

It carries out the reaction phenylglyoxylate + NAD(+) + CoA = benzoyl-CoA + CO2 + NADH. Activated by magnesium ions and thiamine diphosphate. Involved in the anaerobic metabolism of phenylalanine and phenylacetate. Catalyzes the oxidative decarboxylation of phenylglyoxylate to benzoyl-CoA and CO(2). It can also react slowly with 2-oxo-3-methylbutanoate and use different electron acceptors such as benzyl viologen, methyl viologen, FAD or FMN, but NAD seems to be the physiological electron acceptor. Also catalyzes an isotope exchange between CO(2) and the carboxyl group which proves partial or complete reversibility of the oxidative decarboxylation reaction. The protein is NADH-dependent phenylglyoxylate dehydrogenase subunit delta (padF) of Aromatoleum evansii (Azoarcus evansii).